The sequence spans 1562 residues: Phospholipid-transporting ATPase dnf1 (1562 aa).

Disordered regions lie at residues M1–G38, L55–R94, T115–H134, and P146–P166. Residues M1–W275 are Extracellular-facing. Over residues G12–T21 the composition is skewed to polar residues. Over residues D60 to I69 the composition is skewed to acidic residues. The segment covering G71–D86 has biased composition (basic and acidic residues). Residues S276 to L296 traverse the membrane as a helical segment. Topologically, residues R297–R574 are cytoplasmic. Residues S347–T406 are disordered. Residues S358 to E369 are compositionally biased toward basic and acidic residues. Pro residues predominate over residues P372–P381. The chain crosses the membrane as a helical span at residues I575–F595. Residues V596–S614 are Extracellular-facing. A helical membrane pass occupies residues F615–Y635. The Cytoplasmic segment spans residues V636–Q1309. Catalysis depends on D684, which acts as the 4-aspartylphosphate intermediate. Positions 684, 685, 686, 794, 843, 845, 848, and 866 each coordinate ATP. D684 is a Mg(2+) binding site. T686 contacts Mg(2+). The residue at position 954 (S954) is a Phosphoserine. ATP-binding positions include R1022, T1023, T1102, G1103, D1104, V1181–T1188, R1216, and K1222. Mg(2+) is bound at residue D1243. Positions 1246 and 1247 each coordinate ATP. The chain crosses the membrane as a helical span at residues F1310–Y1330. The Extracellular segment spans residues E1331–S1332. The chain crosses the membrane as a helical span at residues W1333–F1353. At E1354 to R1381 the chain is on the cytoplasmic side. The helical transmembrane segment at V1382–Y1402 threads the bilayer. Residues S1403–N1414 lie on the Extracellular side of the membrane. The chain crosses the membrane as a helical span at residues I1415–V1435. At F1436–N1443 the chain is on the cytoplasmic side. Residues I1444–I1464 traverse the membrane as a helical segment. Residues S1465–W1490 lie on the Extracellular side of the membrane. The helical transmembrane segment at W1491–L1511 threads the bilayer. Topologically, residues R1512–D1562 are cytoplasmic.

Belongs to the cation transport ATPase (P-type) (TC 3.A.3) family. Type IV subfamily. Requires Mg(2+) as cofactor.

The protein localises to the golgi apparatus. The protein resides in the trans-Golgi network membrane. Its subcellular location is the endosome membrane. The enzyme catalyses ATP + H2O + phospholipidSide 1 = ADP + phosphate + phospholipidSide 2.. It catalyses the reaction a 1,2-diacyl-sn-glycero-3-phosphocholine(out) + ATP + H2O = a 1,2-diacyl-sn-glycero-3-phosphocholine(in) + ADP + phosphate + H(+). It carries out the reaction a 1,2-diacyl-sn-glycero-3-phosphoethanolamine(out) + ATP + H2O = a 1,2-diacyl-sn-glycero-3-phosphoethanolamine(in) + ADP + phosphate + H(+). Its function is as follows. Catalytic component of a P4-ATPase flippase complex which catalyzes the hydrolysis of ATP coupled to the transport of phosphatidylcholine and small amounts of phosphatidylethanolamine from the lumen to the cytosolic leaflet of the trans-Golgi network and ensures the maintenance of asymmetric distribution of phospholipids. May be involved in transport from early endosomes to the trans-Golgi network (TGN). This Schizosaccharomyces pombe (strain 972 / ATCC 24843) (Fission yeast) protein is Phospholipid-transporting ATPase dnf1.